A 105-amino-acid polypeptide reads, in one-letter code: Protamine-2 (105 aa).

Residues 1-74 are disordered; sequence MVRYRMRSPS…RRSCRRRRRH (74 aa). 2 positions are modified to phosphoserine: serine 8 and serine 10. A compositionally biased stretch (basic and acidic residues) spans 33-42; that stretch reads NPERVEDYGR. Residues 43–74 are compositionally biased toward basic residues; that stretch reads THRGHHRHRRCSRKRLHRIHKRRRSCRRRRRH.

The protein belongs to the protamine P2 family. In terms of assembly, interacts with TDRP. In terms of processing, proteolytic processing into mature chains is required for histone eviction during spermatogenesis. Transition proteins (TNP1 and TNP2) are required for processing. Testis.

Its subcellular location is the nucleus. It is found in the chromosome. Functionally, protamines substitute for histones in the chromatin of sperm during the haploid phase of spermatogenesis. They compact sperm DNA into a highly condensed, stable and inactive complex. This is Protamine-2 (Prm2) from Rattus tunneyi (Tunney's rat).